The following is a 124-amino-acid chain: Peptidyl-tRNA hydrolase (124 aa).

Belongs to the PTH2 family.

The protein resides in the cytoplasm. It catalyses the reaction an N-acyl-L-alpha-aminoacyl-tRNA + H2O = an N-acyl-L-amino acid + a tRNA + H(+). In terms of biological role, the natural substrate for this enzyme may be peptidyl-tRNAs which drop off the ribosome during protein synthesis. The sequence is that of Peptidyl-tRNA hydrolase from Aeropyrum pernix (strain ATCC 700893 / DSM 11879 / JCM 9820 / NBRC 100138 / K1).